Here is a 208-residue protein sequence, read N- to C-terminus: Uracil phosphoribosyltransferase (208 aa).

5-phospho-alpha-D-ribose 1-diphosphate-binding positions include arginine 78, arginine 103, and 130–138 (DPMLATGGS). Residues isoleucine 193 and 198-200 (GDA) contribute to the uracil site. Aspartate 199 lines the 5-phospho-alpha-D-ribose 1-diphosphate pocket.

The protein belongs to the UPRTase family. Mg(2+) is required as a cofactor.

The catalysed reaction is UMP + diphosphate = 5-phospho-alpha-D-ribose 1-diphosphate + uracil. It participates in pyrimidine metabolism; UMP biosynthesis via salvage pathway; UMP from uracil: step 1/1. Its activity is regulated as follows. Allosterically activated by GTP. Catalyzes the conversion of uracil and 5-phospho-alpha-D-ribose 1-diphosphate (PRPP) to UMP and diphosphate. The chain is Uracil phosphoribosyltransferase from Neisseria meningitidis serogroup C (strain 053442).